Here is a 250-residue protein sequence, read N- to C-terminus: Ribosomal RNA small subunit methyltransferase J (250 aa).

S-adenosyl-L-methionine-binding positions include 101-102 (RD), 117-118 (ER), 153-154 (SS), and D171.

The protein belongs to the methyltransferase superfamily. RsmJ family.

It is found in the cytoplasm. The catalysed reaction is guanosine(1516) in 16S rRNA + S-adenosyl-L-methionine = N(2)-methylguanosine(1516) in 16S rRNA + S-adenosyl-L-homocysteine + H(+). Specifically methylates the guanosine in position 1516 of 16S rRNA. The polypeptide is Ribosomal RNA small subunit methyltransferase J (Escherichia coli O81 (strain ED1a)).